The primary structure comprises 503 residues: Lysine--tRNA ligase (503 aa).

The Mg(2+) site is built by Glu-413 and Glu-420.

Belongs to the class-II aminoacyl-tRNA synthetase family. In terms of assembly, homodimer. The cofactor is Mg(2+).

Its subcellular location is the cytoplasm. The enzyme catalyses tRNA(Lys) + L-lysine + ATP = L-lysyl-tRNA(Lys) + AMP + diphosphate. This chain is Lysine--tRNA ligase, found in Mannheimia succiniciproducens (strain KCTC 0769BP / MBEL55E).